Reading from the N-terminus, the 174-residue chain is Ribosome rescue factor SmrB (174 aa).

The 76-residue stretch at 96–171 (LDLHGLTQQQ…GDAAILVLIE (76 aa)) folds into the Smr domain.

The protein belongs to the SmrB family. Associates with collided ribosomes, but not with correctly translating polysomes.

Its function is as follows. Acts as a ribosome collision sensor. Detects stalled/collided disomes (pairs of ribosomes where the leading ribosome is stalled and a second ribosome has collided with it) and endonucleolytically cleaves mRNA at the 5' boundary of the stalled ribosome. Stalled/collided disomes form a new interface (primarily via the 30S subunits) that binds SmrB. Cleaved mRNA becomes available for tmRNA ligation, leading to ribosomal subunit dissociation and rescue of stalled ribosomes. This Tolumonas auensis (strain DSM 9187 / NBRC 110442 / TA 4) protein is Ribosome rescue factor SmrB.